The chain runs to 352 residues: (2E,6E)-farnesyl diphosphate synthase (352 aa).

Isopentenyl diphosphate is bound by residues Lys43, Arg46, and His77. 2 residues coordinate Mg(2+): Asp84 and Asp88. The DDXXD motif signature appears at 84–88 (DDLID). Arg94 lines the isopentenyl diphosphate pocket. The DDXXD motif signature appears at 236 to 240 (DDVLG).

It belongs to the FPP/GGPP synthase family. The cofactor is Mg(2+).

The enzyme catalyses isopentenyl diphosphate + dimethylallyl diphosphate = (2E)-geranyl diphosphate + diphosphate. It catalyses the reaction isopentenyl diphosphate + (2E)-geranyl diphosphate = (2E,6E)-farnesyl diphosphate + diphosphate. Its pathway is isoprenoid biosynthesis; geranyl diphosphate biosynthesis; geranyl diphosphate from dimethylallyl diphosphate and isopentenyl diphosphate: step 1/1. It participates in isoprenoid biosynthesis; farnesyl diphosphate biosynthesis; farnesyl diphosphate from geranyl diphosphate and isopentenyl diphosphate. Its function is as follows. Catalyzes the sequential condensations of isopentenyl pyrophosphate (IPP) with dimethylallyl diphosphate (DMAPP) to yield geranyl diphosphate (GPP) and with GPP to yield (2E,6E)-farnesyl diphosphate (E,E-FPP). The sequence is that of (2E,6E)-farnesyl diphosphate synthase from Mycobacterium tuberculosis (strain ATCC 25618 / H37Rv).